The following is a 438-amino-acid chain: Carboxypeptidase A6 (438 aa).

The first 30 residues, 1–30, serve as a signal peptide directing secretion; that stretch reads MNFLGNPRSHTAAFLPVCWLLLNILKPGHC. Residues 31 to 129 constitute a propeptide, activation peptide; it reads HSYDNRYAGD…NSLQTQRNRR (99 aa). 2 N-linked (GlcNAc...) asparagine glycosylation sites follow: Asn-89 and Asn-153. A Peptidase M14 domain is found at 138–433; it reads VYHSLEDIQS…LAVKNITMHL (296 aa). Residues His-197 and Glu-200 each contribute to the Zn(2+) site. Substrate contacts are provided by residues 197 to 200, Arg-255, and 272 to 273; these read HARE and NR. Cys-266 and Cys-289 are oxidised to a cystine. His-325 is a binding site for Zn(2+). Residue 326-327 coordinates substrate; sequence AY. N-linked (GlcNAc...) asparagine glycosylation is present at Asn-344. Residue Tyr-377 coordinates substrate. Glu-399 acts as the Proton donor/acceptor in catalysis. An N-linked (GlcNAc...) asparagine glycan is attached at Asn-428.

This sequence belongs to the peptidase M14 family. Zn(2+) serves as cofactor. As to expression, in brain, highly expressed in the olfactory bulb with lower levels in other regions including cerebral cortex, hippocampus, hypothalamus, striatum and medulla. Within the olfactory bulb, highest levels occur in the mitral and granular layers with lower levels in the internal and external plexiform layers. Moderate levels are found in the epididymis with low levels in colon and spleen. Not detected in adrenal, liver, lung, ovary or testis. At embryonic day 14.5, enriched in eye, ear, osteoblasts, stomach, skin, dorsal root ganglia and throughout the CNS.

Its subcellular location is the secreted. It localises to the extracellular space. The protein resides in the extracellular matrix. May be involved in the proteolytic inactivation of enkephalins and neurotensin in some brain areas. May convert inactive angiotensin I into the biologically active angiotensin II. Releases a C-terminal amino acid, with preference for large hydrophobic C-terminal amino acids and shows only very weak activity toward small amino acids and histidine. The protein is Carboxypeptidase A6 (Cpa6) of Mus musculus (Mouse).